The sequence spans 522 residues: Protein nucleotidyltransferase YdiU (522 aa).

The ATP site is built by glycine 109, glycine 111, arginine 112, lysine 132, aspartate 144, glycine 145, arginine 195, and arginine 202. Aspartate 271 (proton acceptor) is an active-site residue. Mg(2+) contacts are provided by asparagine 272 and aspartate 281. Aspartate 281 contributes to the ATP binding site.

This sequence belongs to the SELO family. Mg(2+) is required as a cofactor. The cofactor is Mn(2+).

The catalysed reaction is L-seryl-[protein] + ATP = 3-O-(5'-adenylyl)-L-seryl-[protein] + diphosphate. It carries out the reaction L-threonyl-[protein] + ATP = 3-O-(5'-adenylyl)-L-threonyl-[protein] + diphosphate. It catalyses the reaction L-tyrosyl-[protein] + ATP = O-(5'-adenylyl)-L-tyrosyl-[protein] + diphosphate. The enzyme catalyses L-histidyl-[protein] + UTP = N(tele)-(5'-uridylyl)-L-histidyl-[protein] + diphosphate. The catalysed reaction is L-seryl-[protein] + UTP = O-(5'-uridylyl)-L-seryl-[protein] + diphosphate. It carries out the reaction L-tyrosyl-[protein] + UTP = O-(5'-uridylyl)-L-tyrosyl-[protein] + diphosphate. Functionally, nucleotidyltransferase involved in the post-translational modification of proteins. It can catalyze the addition of adenosine monophosphate (AMP) or uridine monophosphate (UMP) to a protein, resulting in modifications known as AMPylation and UMPylation. In Burkholderia cenocepacia (strain HI2424), this protein is Protein nucleotidyltransferase YdiU.